The primary structure comprises 133 residues: Large ribosomal subunit protein bL19 (133 aa).

The protein belongs to the bacterial ribosomal protein bL19 family.

Its function is as follows. This protein is located at the 30S-50S ribosomal subunit interface and may play a role in the structure and function of the aminoacyl-tRNA binding site. This Stenotrophomonas maltophilia (strain K279a) protein is Large ribosomal subunit protein bL19.